The following is a 610-amino-acid chain: Phosphomethylpyrimidine synthase (610 aa).

Substrate contacts are provided by residues asparagine 216, methionine 245, tyrosine 274, histidine 310, 330 to 332, 371 to 374, and glutamate 410; these read SRG and DGLR. Histidine 414 contributes to the Zn(2+) binding site. Residue tyrosine 437 participates in substrate binding. Histidine 478 serves as a coordination point for Zn(2+). Positions 558, 561, and 566 each coordinate [4Fe-4S] cluster.

It belongs to the ThiC family. As to quaternary structure, homodimer. [4Fe-4S] cluster serves as cofactor.

The enzyme catalyses 5-amino-1-(5-phospho-beta-D-ribosyl)imidazole + S-adenosyl-L-methionine = 4-amino-2-methyl-5-(phosphooxymethyl)pyrimidine + CO + 5'-deoxyadenosine + formate + L-methionine + 3 H(+). It participates in cofactor biosynthesis; thiamine diphosphate biosynthesis. Its function is as follows. Catalyzes the synthesis of the hydroxymethylpyrimidine phosphate (HMP-P) moiety of thiamine from aminoimidazole ribotide (AIR) in a radical S-adenosyl-L-methionine (SAM)-dependent reaction. This Rhizobium etli (strain ATCC 51251 / DSM 11541 / JCM 21823 / NBRC 15573 / CFN 42) protein is Phosphomethylpyrimidine synthase.